A 462-amino-acid chain; its full sequence is tRNA(Ile)-lysidine synthase (462 aa).

Position 31–36 (31–36 (SGGRDS)) interacts with ATP.

This sequence belongs to the tRNA(Ile)-lysidine synthase family.

Its subcellular location is the cytoplasm. The catalysed reaction is cytidine(34) in tRNA(Ile2) + L-lysine + ATP = lysidine(34) in tRNA(Ile2) + AMP + diphosphate + H(+). Functionally, ligates lysine onto the cytidine present at position 34 of the AUA codon-specific tRNA(Ile) that contains the anticodon CAU, in an ATP-dependent manner. Cytidine is converted to lysidine, thus changing the amino acid specificity of the tRNA from methionine to isoleucine. This chain is tRNA(Ile)-lysidine synthase, found in Ralstonia nicotianae (strain ATCC BAA-1114 / GMI1000) (Ralstonia solanacearum).